We begin with the raw amino-acid sequence, 430 residues long: Adenylosuccinate synthetase (430 aa).

GTP-binding positions include 12–18 (GDEGKGK) and 40–42 (GHT). The Proton acceptor role is filled by Asp-13. Residues Asp-13 and Gly-40 each coordinate Mg(2+). IMP is bound by residues 13–16 (DEGK), 38–41 (NAGH), Thr-130, Arg-144, Gln-224, Thr-239, and Arg-303. Catalysis depends on His-41, which acts as the Proton donor. Substrate is bound at residue 299-305 (VVTGRKR). Residues Arg-305, 331 to 333 (KLD), and 413 to 415 (STS) contribute to the GTP site.

This sequence belongs to the adenylosuccinate synthetase family. Homodimer. It depends on Mg(2+) as a cofactor.

The protein resides in the cytoplasm. It carries out the reaction IMP + L-aspartate + GTP = N(6)-(1,2-dicarboxyethyl)-AMP + GDP + phosphate + 2 H(+). It functions in the pathway purine metabolism; AMP biosynthesis via de novo pathway; AMP from IMP: step 1/2. Its function is as follows. Plays an important role in the de novo pathway of purine nucleotide biosynthesis. Catalyzes the first committed step in the biosynthesis of AMP from IMP. The protein is Adenylosuccinate synthetase of Methylobacterium nodulans (strain LMG 21967 / CNCM I-2342 / ORS 2060).